The following is a 701-amino-acid chain: F-box/LRR-repeat protein 17 (701 aa).

Disordered stretches follow at residues 73–93 (SAGL…RDGA), 227–250 (GGGG…CQAP), and 279–321 (VRAG…IPDI). The span at 81–90 (PLSPPPPPPR) shows a compositional bias: pro residues. Residues 227–236 (GGGGPAGGGA) are compositionally biased toward gly residues. Positions 285-294 (APSSAQQQPE) are enriched in polar residues. An F-box domain is found at 318-365 (IPDINQLPPSILLKIFSNLSLNERCLSASLVCKYWRDLCLDFQFWKQL).

Belongs to the FBXL17 family. In terms of assembly, part of the SCF (SKP1-CUL1-F-box) E3 ubiquitin-protein ligase complex SCF(FBXL17) composed of CUL1, SKP1, RBX1 and FBXL17. Interacts with BTB domain-containing proteins such as KLHL12, BCL6 and BACH1; specifically recognizes and binds a conserved degron of non-consecutive residues present at the interface of BTB dimers of aberrant composition. Interacts with SUFU. Interacts with PRMT1.

Its subcellular location is the cytoplasm. The protein resides in the nucleus. Functionally, substrate-recognition component of the SCF(FBXL17) E3 ubiquitin ligase complex, a key component of a quality control pathway required to ensure functional dimerization of BTB domain-containing proteins (dimerization quality control, DQC). FBXL17 specifically recognizes and binds a conserved degron of non-consecutive residues present at the interface of BTB dimers of aberrant composition: aberrant BTB dimer are then ubiquitinated by the SCF(FBXL17) complex and degraded by the proteasome. The ability of the SCF(FBXL17) complex to eliminate compromised BTB dimers is required for the differentiation and survival of neural crest and neuronal cells. The SCF(FBXL17) complex mediates ubiquitination and degradation of BACH1. The SCF(FBXL17) complex is also involved in the regulation of the hedgehog/smoothened (Hh) signaling pathway by mediating the ubiquitination and degradation of SUFU, allowing the release of GLI1 from SUFU for proper Hh signal transduction. The SCF(FBXL17) complex mediates ubiquitination and degradation of PRMT1. The sequence is that of F-box/LRR-repeat protein 17 from Mus musculus (Mouse).